Reading from the N-terminus, the 291-residue chain is Diaminopimelate epimerase (291 aa).

3 residues coordinate substrate: Asn17, Gln50, and Asn70. The active-site Proton donor is the Cys79. Residues 80 to 81 (GN), Asn167, Asn200, and 218 to 219 (ER) each bind substrate. Residue Cys227 is the Proton acceptor of the active site. 228-229 (GS) serves as a coordination point for substrate.

Belongs to the diaminopimelate epimerase family. Homodimer.

The protein resides in the cytoplasm. The catalysed reaction is (2S,6S)-2,6-diaminopimelate = meso-2,6-diaminopimelate. Its pathway is amino-acid biosynthesis; L-lysine biosynthesis via DAP pathway; DL-2,6-diaminopimelate from LL-2,6-diaminopimelate: step 1/1. Functionally, catalyzes the stereoinversion of LL-2,6-diaminopimelate (L,L-DAP) to meso-diaminopimelate (meso-DAP), a precursor of L-lysine and an essential component of the bacterial peptidoglycan. The protein is Diaminopimelate epimerase of Bradyrhizobium diazoefficiens (strain JCM 10833 / BCRC 13528 / IAM 13628 / NBRC 14792 / USDA 110).